Reading from the N-terminus, the 969-residue chain is Proprotein convertase subtilisin/kexin type 6 (969 aa).

Residues 1–16 are compositionally biased toward pro residues; that stretch reads MPPRAPPAPGPRPPPR. Positions 1 to 39 are disordered; the sequence is MPPRAPPAPGPRPPPRAAAATDTAAGAGGAGGAGGAGGP. The signal sequence occupies residues 1 to 63; sequence MPPRAPPAPG…LLALPAACSA (63 aa). Residues 26–39 are compositionally biased toward gly residues; that stretch reads GAGGAGGAGGAGGP. Positions 64-149 are excised as a propeptide; it reads PPPRPVYTNH…QQEVKRRVKR (86 aa). The Peptidase S8 domain maps to 168–487; sequence MWYLHCGDKN…FGLVDAEALV (320 aa). Residues aspartate 205 and histidine 246 each act as charge relay system in the active site. A glycan (N-linked (GlcNAc...) asparagine) is linked at asparagine 259. Serine 420 functions as the Charge relay system in the catalytic mechanism. Residues 495-635 form the P/Homo B domain; the sequence is AVPSQHMCVA…SLILYGTAEH (141 aa). The Cell attachment site signature appears at 553-555; that stretch reads RGD. The interval 658 to 683 is disordered; the sequence is EPPKAALSPSQVEVPEDEEDYTAQST. FU repeat units follow at residues 692 to 739, 743 to 790, 794 to 838, 842 to 887, and 895 to 943; these read TSVC…GYFG, ARRC…GFYA, QKNC…GTYF, LIRC…GFYP, and HKVC…ETFC. The CRM (Cys-rich motif) stretch occupies residues 695-930; it reads CHPECGDKGC…GFTQLGTSCI (236 aa). 2 N-linked (GlcNAc...) asparagine glycosylation sites follow: asparagine 914 and asparagine 932. The 39-residue stretch at 931–969 folds into the PLAC domain; it reads TNHTCSNADETFCEMVKSNRLCERKLFIQFCCRTCLLAG.

This sequence belongs to the peptidase S8 family. The PACE4A-I precursor protein seems to exist in the reticulum endoplasmic as both a monomer and a dimer-sized complex whereas mature PACE4A-I exists only as a monomer, suggesting that propeptide cleavage affects its tertiary or quaternary structure. Interacts (immature form including the propeptide) with RCN3; probably involved in the maturation and the secretion of PCSK6. It depends on Ca(2+) as a cofactor. Each PACE4 isoform exhibits a unique restricted distribution. Isoform PACE4A-I is expressed in heart, brain, placenta, lung, skeletal muscle, kidney, pancreas, but at comparatively higher levels in the liver. Isoform PACE4A-II is at least expressed in placenta. Isoform PACE4B was only found in the embryonic kidney cell line from which it was isolated. Isoform PACE4C and isoform PACE4D are expressed in placenta. Isoform PACE4E-I is expressed in cerebellum, placenta and pituitary. Isoform PACE4E-II is at least present in cerebellum.

Its subcellular location is the secreted. It localises to the endoplasmic reticulum. The protein localises to the endomembrane system. Functionally, serine endoprotease that processes various proproteins by cleavage at paired basic amino acids, recognizing the RXXX[KR]R consensus motif. Likely functions in the constitutive secretory pathway, with unique restricted distribution in both neuroendocrine and non-neuroendocrine tissues. The protein is Proprotein convertase subtilisin/kexin type 6 (PCSK6) of Homo sapiens (Human).